The following is a 543-amino-acid chain: Tyrosine-protein kinase Yes (543 aa).

Over residues 1–20 (MGCIKSKENKSPAIKYRPEN) the composition is skewed to basic and acidic residues. The segment at 1–45 (MGCIKSKENKSPAIKYRPENTPEPVSTSVSHYGAEPTTVSPCPSS) is disordered. Residue Gly2 is the site of N-myristoyl glycine attachment. The S-palmitoyl cysteine; in membrane form moiety is linked to residue Cys3. The residue at position 21 (Thr21) is a Phosphothreonine. Tyr32 is modified (phosphotyrosine). Ser40 is subject to Phosphoserine. Residues 91-152 (GGVTIFVALY…PSNYVAPADS (62 aa)) form the SH3 domain. The 98-residue stretch at 158–255 (WYFGKMGRKD…GLCHKLTTVC (98 aa)) folds into the SH2 domain. Residues 277 to 530 (LRLEVKLGQG…YIQSFLEDYF (254 aa)) enclose the Protein kinase domain. Residues 283–291 (LGQGCFGEV) and Lys305 each bind ATP. 2 positions are modified to phosphotyrosine: Tyr336 and Tyr345. Residue Asp396 is the Proton acceptor of the active site. Tyr426 bears the Phosphotyrosine; by autocatalysis mark. Phosphotyrosine is present on Tyr446. Tyr537 carries the phosphotyrosine; by CSK modification.

This sequence belongs to the protein kinase superfamily. Tyr protein kinase family. SRC subfamily. Interacts with YAP1 and CSF1R. Interacts with CTNND1; this interaction allows YES1-mediated activation of FYN and FER and subsequent phosphorylation of CTNND1. Interacts with FASLG. Interacts with IL6ST/gp130. Interacts with SCRIB, when YES1 is in a closed conformation; the interaction facilitates YES1 autophosphorylation. In terms of processing, phosphorylated. Phosphorylation by CSK on the C-terminal tail maintains the enzyme in an inactive state. Autophosphorylation at Tyr-426 maintains enzyme activity by blocking CSK-mediated inhibition. Palmitoylation at Cys-3 promotes membrane localization. In terms of tissue distribution, expressed in the epithelial cells of renal proximal tubules and stomach as well as hematopoietic cells in the bone marrow and spleen in the fetal tissues. In adult, expressed in epithelial cells of the renal proximal tubules and present in keratinocytes in the basal epidermal layer of epidermis.

It is found in the cell membrane. The protein localises to the cytoplasm. The protein resides in the cytoskeleton. It localises to the microtubule organizing center. Its subcellular location is the centrosome. It is found in the cytosol. The protein localises to the cell junction. It catalyses the reaction L-tyrosyl-[protein] + ATP = O-phospho-L-tyrosyl-[protein] + ADP + H(+). Non-receptor protein tyrosine kinase that is involved in the regulation of cell growth and survival, apoptosis, cell-cell adhesion, cytoskeleton remodeling, and differentiation. Stimulation by receptor tyrosine kinases (RTKs) including EGFR, PDGFR, CSF1R and FGFR leads to recruitment of YES1 to the phosphorylated receptor, and activation and phosphorylation of downstream substrates. Upon EGFR activation, promotes the phosphorylation of PARD3 to favor epithelial tight junction assembly. Participates in the phosphorylation of specific junctional components such as CTNND1 by stimulating the FYN and FER tyrosine kinases at cell-cell contacts. Upon T-cell stimulation by CXCL12, phosphorylates collapsin response mediator protein 2/DPYSL2 and induces T-cell migration. Participates in CD95L/FASLG signaling pathway and mediates AKT-mediated cell migration. Plays a role in cell cycle progression by phosphorylating the cyclin-dependent kinase 4/CDK4 thus regulating the G1 phase. Also involved in G2/M progression and cytokinesis. Catalyzes phosphorylation of organic cation transporter OCT2 which induces its transport activity. This chain is Tyrosine-protein kinase Yes (YES1), found in Homo sapiens (Human).